Here is a 510-residue protein sequence, read N- to C-terminus: MYQLEIIPGKLSLKQLREVSRQPTQLSLTEDALPEMLISAEAVAQVIKDDKVVYGINTGFGLLANTRIAAEDLETLQRSIVLSHAAGIGTFMDDATVRMMIVLKVNSLSRGYSGIRPLVVNALMQLVNTEVYPCIPKKGSVGASGDLAPLAHMSTVLLGEGEARYQGEVITGAQALEIAGLEPITLAPKEGLALLNGTQASTAFALEGFFAAEDLYAAATVCGAMSVDAALGSRRPFDPRIHRVRGHRSQIDAAMGYRHMLGQNSEIGLSHQQCEKVQDPYSLRCQPQVMGACLQQIRNSAVTLEVEANAVSDNPLVFADDGDIISGGNFHAEPVAMAADNLALAIAEIGSLSERRMALLIDSGLSKLPPFLVDNGGVNSGFMIAQVTAAALASENKSLAHPASVDSLPTSANQEDHVSMATFAARRLTDMAENTRGILAVELLAAAQGLDFRSPNKSSELIEQAKMQLRERVSFYDKDRYFAPDIAKANQLLKEATYNALMPATLLPSL.

A cross-link (5-imidazolinone (Ala-Gly)) is located at residues 143 to 145 (ASG). Serine 144 is subject to 2,3-didehydroalanine (Ser).

It belongs to the PAL/histidase family. Contains an active site 4-methylidene-imidazol-5-one (MIO), which is formed autocatalytically by cyclization and dehydration of residues Ala-Ser-Gly.

The protein localises to the cytoplasm. The enzyme catalyses L-histidine = trans-urocanate + NH4(+). Its pathway is amino-acid degradation; L-histidine degradation into L-glutamate; N-formimidoyl-L-glutamate from L-histidine: step 1/3. This Photobacterium profundum (strain SS9) protein is Histidine ammonia-lyase.